Reading from the N-terminus, the 266-residue chain is Orotidine 5'-phosphate decarboxylase (266 aa).

Substrate-binding positions include D38, K60–H62, D92–T101, Y218, and R236. The active-site Proton donor is the K94.

The protein belongs to the OMP decarboxylase family.

It catalyses the reaction orotidine 5'-phosphate + H(+) = UMP + CO2. It participates in pyrimidine metabolism; UMP biosynthesis via de novo pathway; UMP from orotate: step 2/2. The sequence is that of Orotidine 5'-phosphate decarboxylase (URA3) from Candida maltosa (Yeast).